Here is a 581-residue protein sequence, read N- to C-terminus: Arginine--tRNA ligase (581 aa).

The 'HIGH' region signature appears at Pro-126–His-136.

It belongs to the class-I aminoacyl-tRNA synthetase family. Monomer.

The protein resides in the cytoplasm. The enzyme catalyses tRNA(Arg) + L-arginine + ATP = L-arginyl-tRNA(Arg) + AMP + diphosphate. In Shewanella piezotolerans (strain WP3 / JCM 13877), this protein is Arginine--tRNA ligase.